The primary structure comprises 182 residues: MIRLYIQCLILWIIILPLLAAREGFGGRCLKPKDKGNRSCGRSQKYYYFNAEKGRCYRFTYYGCKGNSNRFKKKSDCVSSCACQAVLDHGSHCKSKAKRKEGSKVRYYFDSESGLCRKFWYVGCGGNHNKFTSKTSCKKVCVKDAPKRSKSSKPTSKTFSKNAQYSMNSLLRMLKNLSKKVM.

The N-terminal stretch at 1 to 20 (MIRLYIQCLILWIIILPLLA) is a signal peptide. 2 consecutive BPTI/Kunitz inhibitor domains span residues 29–81 (CLKP…VSSC) and 83–141 (CQAV…KKVC).

In terms of tissue distribution, nacreous layer of shell (at protein level). Expressed primarily in the mantle with highest level in the mantle pallium and lower level in the mantle edge.

The protein localises to the secreted. The protein is BPTI/Kunitz domain-containing protein 5 of Margaritifera margaritifera (Freshwater pearl mussel).